A 494-amino-acid chain; its full sequence is MFGLFRSKAPEAPPKHPTDTIIPLNAADDTEVLRSVVVVLSYRFDDVLDPVKLKSSFEKLLDRPGWRKIGARLRLNDNGRLEYHIPERYDEKRPIVTWSHVSHNVSVLKHPLSSKLPRASARPAVVGDPNDFDELTSSPEAPKTLHDYLTRDVPQLCLHVVSFTDSTLVSISLPHTLTDGTGGAQIYRCWALVLQDRDDEVPPFHGYDSDPLATFGETSSQPYMYDPKLLTGWRKWLFILYQVYDGWRYRTSSRIVCVPGPYLAAQRKKAIEEIRAETGNDKAFVSDNDVLTAWFTRLAVGHYPRNSNLTVRIMNAFALASVLGNDRLPSTKAFISNAATEIYTFLSVRDFFTKPLSYAAYAIRRSMMEGGTREQVEALQAVKKQTLAREGHTWPIFGDASMEMMSYSNWTKGKYFETDFSAAIVKEGFAREARAEKPGFASMVQFNAWSTKFDLRNLMPIMGKDAAGNYWLQGPLRDVVWKRIEKELREEPLQ.

Its subcellular location is the nucleus. Transcription co-regulator that might be involved in the regulation of the expression of the gene cluster that mediates the biosynthesis of calbistrins and related compounds such as decumbenones. Calbistrin A is a secondary metabolite with an interesting structure that was recently found to have bioactivity against leukemia cells. It consists of two polyketides linked by an ester bond: a bicyclic decalin containing polyketide and a linear 12 carbon dioic acid structure. The sequence is that of Transcriptional regulator calD from Penicillium decumbens.